Reading from the N-terminus, the 274-residue chain is Large ribosomal subunit protein uL2 (274 aa).

Residues 224 to 274 (VMNPVDHPHGGGEGRSPIGRNPVTPWGKPALGARTRKKKPGDRLIVKRRAR) form a disordered region. Residues 257-274 (RTRKKKPGDRLIVKRRAR) show a composition bias toward basic residues.

It belongs to the universal ribosomal protein uL2 family. As to quaternary structure, part of the 50S ribosomal subunit. Forms a bridge to the 30S subunit in the 70S ribosome.

One of the primary rRNA binding proteins. Required for association of the 30S and 50S subunits to form the 70S ribosome, for tRNA binding and peptide bond formation. It has been suggested to have peptidyltransferase activity; this is somewhat controversial. Makes several contacts with the 16S rRNA in the 70S ribosome. This chain is Large ribosomal subunit protein uL2, found in Pelotomaculum thermopropionicum (strain DSM 13744 / JCM 10971 / SI).